The chain runs to 357 residues: Endo-1,4-beta-xylanase Xyn11B (357 aa).

The signal sequence occupies residues 1 to 27; sequence MKIFQNTKNVIVSIAWAAALCTSAVSA. Residues 29–226 form the GH11 domain; that stretch reads TLTSNSTGTN…SRGSSDITVS (198 aa). Glu116 functions as the Nucleophile in the catalytic mechanism. The Proton donor role is filled by Glu213. Residues 220–245 are disordered; sequence SSDITVSQGGSSGGGNSSSSSSASGG.

This sequence belongs to the glycosyl hydrolase 11 (cellulase G) family.

It localises to the secreted. It catalyses the reaction Endohydrolysis of (1-&gt;4)-beta-D-xylosidic linkages in xylans.. The protein operates within glycan degradation; xylan degradation. Functionally, endo-acting xylanase which specifically cleaves internal linkages on the xylan backbone, releasing xylooligosaccharides. Is able to hydrolyze glucuronoxylan and the arabinoxylan from wheat. The polypeptide is Endo-1,4-beta-xylanase Xyn11B (xyn11B) (Cellvibrio japonicus (Pseudomonas fluorescens subsp. cellulosa)).